The primary structure comprises 532 residues: Phosphoenolpyruvate carboxykinase (ATP) (532 aa).

Arginine 60, tyrosine 194, and lysine 200 together coordinate substrate. Residues lysine 200, histidine 219, and glycine 237–threonine 245 each bind ATP. Lysine 200 and histidine 219 together coordinate Mn(2+). Aspartate 258 serves as a coordination point for Mn(2+). The ATP site is built by glutamate 286, arginine 324, and threonine 449. A substrate-binding site is contributed by arginine 324.

It belongs to the phosphoenolpyruvate carboxykinase (ATP) family. The cofactor is Mn(2+).

The protein resides in the cytoplasm. The catalysed reaction is oxaloacetate + ATP = phosphoenolpyruvate + ADP + CO2. Its pathway is carbohydrate biosynthesis; gluconeogenesis. Its function is as follows. Involved in the gluconeogenesis. Catalyzes the conversion of oxaloacetate (OAA) to phosphoenolpyruvate (PEP) through direct phosphoryl transfer between the nucleoside triphosphate and OAA. This Ruegeria pomeroyi (strain ATCC 700808 / DSM 15171 / DSS-3) (Silicibacter pomeroyi) protein is Phosphoenolpyruvate carboxykinase (ATP).